A 175-amino-acid polypeptide reads, in one-letter code: Thermoresistant gluconokinase (175 aa).

15 to 22 (GVSGSGKS) provides a ligand contact to ATP.

Belongs to the gluconokinase GntK/GntV family.

It catalyses the reaction D-gluconate + ATP = 6-phospho-D-gluconate + ADP + H(+). The protein operates within carbohydrate acid metabolism; D-gluconate degradation. The protein is Thermoresistant gluconokinase (gntK) of Escherichia coli (strain K12).